Here is a 259-residue protein sequence, read N- to C-terminus: Ribonuclease HII (259 aa).

Residues 69–257 enclose the RNase H type-2 domain; that stretch reads VAVCGVDEVG…VLEESQGLIY (189 aa). Residues Asp75, Glu76, and Asp167 each contribute to the a divalent metal cation site.

It belongs to the RNase HII family. Requires Mn(2+) as cofactor. It depends on Mg(2+) as a cofactor.

Its subcellular location is the cytoplasm. It carries out the reaction Endonucleolytic cleavage to 5'-phosphomonoester.. Its function is as follows. Endonuclease that specifically degrades the RNA of RNA-DNA hybrids. This Shouchella clausii (strain KSM-K16) (Alkalihalobacillus clausii) protein is Ribonuclease HII.